Here is a 163-residue protein sequence, read N- to C-terminus: Urease accessory protein UreE (163 aa).

A disordered region spans residues 130–163; that stretch reads PFEPEPGAYGGGHGHTHSHDHSHQHDPAGHAHEH. Positions 146–163 are enriched in basic and acidic residues; it reads HSHDHSHQHDPAGHAHEH.

Belongs to the UreE family.

The protein resides in the cytoplasm. Its function is as follows. Involved in urease metallocenter assembly. Binds nickel. Probably functions as a nickel donor during metallocenter assembly. This is Urease accessory protein UreE from Alkalilimnicola ehrlichii (strain ATCC BAA-1101 / DSM 17681 / MLHE-1).